Here is a 432-residue protein sequence, read N- to C-terminus: MSEISVIILAAGFGTRMKSKKAKVLFELCGEPMLFHILKKAYEITDNVNVVLHYDFENIKNIVLSKFPNVKIYKQDHENFPGTAGALKNINLNSQKTLIICGDMPLVKTAELKKLCKGETDINLSVFYAENPFGYGRVINKNGKILKIVEQKDANEQELKENCVNAGAYCFKTDILKQILPLIKNENSQKEYYLTDAIEIALQKKLKCQAIEVAEENFMGINDKFALSKAETIIQNEIKENLMKNGVLMRLPESIYIDSRAKFIGECELHENVSIIGSCVIENSIIKSSSVIENSHIINSDIGPMAHIRPDCEISDTHIGNFVELKKAKVNKIKAGHLSYLGDCEIQEGTNVGCGTITCNYDGKRKYRTKIGKNVFIGSDTQLVAPVEIQDNVLIAAGSTITKNVEEGSLAISRIKQENKPGFFAKFFKEIK.

Positions M1–K224 are pyrophosphorylase. UDP-N-acetyl-alpha-D-glucosamine is bound by residues L9–G12, K23, and G82–T83. Position 103 (D103) interacts with Mg(2+). UDP-N-acetyl-alpha-D-glucosamine is bound by residues G136, E150, N165, and N222. A Mg(2+)-binding site is contributed by N222. The tract at residues F225 to N245 is linker. An N-acetyltransferase region spans residues G246–K432. Residues R309 and K326 each coordinate UDP-N-acetyl-alpha-D-glucosamine. H337 serves as the catalytic Proton acceptor. Residues Y340 and N351 each contribute to the UDP-N-acetyl-alpha-D-glucosamine site. Acetyl-CoA-binding positions include N360–Y361, S379, A397, and R414.

The protein in the N-terminal section; belongs to the N-acetylglucosamine-1-phosphate uridyltransferase family. It in the C-terminal section; belongs to the transferase hexapeptide repeat family. In terms of assembly, homotrimer. The cofactor is Mg(2+).

It localises to the cytoplasm. It catalyses the reaction alpha-D-glucosamine 1-phosphate + acetyl-CoA = N-acetyl-alpha-D-glucosamine 1-phosphate + CoA + H(+). The catalysed reaction is N-acetyl-alpha-D-glucosamine 1-phosphate + UTP + H(+) = UDP-N-acetyl-alpha-D-glucosamine + diphosphate. The protein operates within nucleotide-sugar biosynthesis; UDP-N-acetyl-alpha-D-glucosamine biosynthesis; N-acetyl-alpha-D-glucosamine 1-phosphate from alpha-D-glucosamine 6-phosphate (route II): step 2/2. It participates in nucleotide-sugar biosynthesis; UDP-N-acetyl-alpha-D-glucosamine biosynthesis; UDP-N-acetyl-alpha-D-glucosamine from N-acetyl-alpha-D-glucosamine 1-phosphate: step 1/1. It functions in the pathway bacterial outer membrane biogenesis; LPS lipid A biosynthesis. Functionally, catalyzes the last two sequential reactions in the de novo biosynthetic pathway for UDP-N-acetylglucosamine (UDP-GlcNAc). The C-terminal domain catalyzes the transfer of acetyl group from acetyl coenzyme A to glucosamine-1-phosphate (GlcN-1-P) to produce N-acetylglucosamine-1-phosphate (GlcNAc-1-P), which is converted into UDP-GlcNAc by the transfer of uridine 5-monophosphate (from uridine 5-triphosphate), a reaction catalyzed by the N-terminal domain. The sequence is that of Bifunctional protein GlmU from Campylobacter hominis (strain ATCC BAA-381 / DSM 21671 / CCUG 45161 / LMG 19568 / NCTC 13146 / CH001A).